Here is a 209-residue protein sequence, read N- to C-terminus: Large ribosomal subunit protein uL3 (209 aa).

Gln150 bears the N5-methylglutamine mark.

Belongs to the universal ribosomal protein uL3 family. In terms of assembly, part of the 50S ribosomal subunit. Forms a cluster with proteins L14 and L19. In terms of processing, methylated by PrmB.

In terms of biological role, one of the primary rRNA binding proteins, it binds directly near the 3'-end of the 23S rRNA, where it nucleates assembly of the 50S subunit. The sequence is that of Large ribosomal subunit protein uL3 from Buchnera aphidicola subsp. Acyrthosiphon pisum (strain 5A).